A 507-amino-acid polypeptide reads, in one-letter code: MVNIRPDEISNIIRKQIEQYNQEVKVINIGTVLQVGDGIARIYGLDKVMAGELVEFEDGTVGIALNLESDNVGVVLMGDGLSIQEGSSVEATGKIAQIPVSDAYLGRVVNALAQPIDGKGQIPAYEFRLIESPAPGIISRRSVYEPMQTGLIAIDSMIPIGRGQRELIIGDRQTGKTAVATDTILNQKGQNVICVYVAIGQKASSVAQVVNTFEERGALEYTIVVAETADSPATLQYLAPYTGAALAEYFMYRKQHTLIIYDDLSKQAQAYRQMSLLLRRPPGREAYPGDVFYLHSRLLERAAKLSSQLGEGSMTALPIVETQAGDVSAYIPTNVISITDGQIFLSADLFNAGIRPAINVGISVSRVGSAAQIKAMKQVAGKLKLELAQFAELEAFAQFASDLDKATQNQLARGQRLRELLKQSQSAPLAVEEQVATIYTGVNGYLDVLEVEQVKKFLVQLREYLITNKPQFVEIIRSTKVFTEQAEIILKEAIKEHTEFFLLQEQK.

An ATP-binding site is contributed by 170-177 (GDRQTGKT).

Belongs to the ATPase alpha/beta chains family. In terms of assembly, F-type ATPases have 2 components, CF(1) - the catalytic core - and CF(0) - the membrane proton channel. CF(1) has five subunits: alpha(3), beta(3), gamma(1), delta(1), epsilon(1). CF(0) has four main subunits: a, b, b' and c.

The protein localises to the plastid. The protein resides in the chloroplast thylakoid membrane. It catalyses the reaction ATP + H2O + 4 H(+)(in) = ADP + phosphate + 5 H(+)(out). Functionally, produces ATP from ADP in the presence of a proton gradient across the membrane. The alpha chain is a regulatory subunit. The sequence is that of ATP synthase subunit alpha, chloroplastic from Anthoceros angustus (Hornwort).